We begin with the raw amino-acid sequence, 200 residues long: Probable molybdenum cofactor guanylyltransferase (200 aa).

GTP is bound by residues 9–11 (LAG), lysine 21, aspartate 69, and aspartate 100. A Mg(2+)-binding site is contributed by aspartate 100.

Belongs to the MobA family. Requires Mg(2+) as cofactor.

Its subcellular location is the cytoplasm. It catalyses the reaction Mo-molybdopterin + GTP + H(+) = Mo-molybdopterin guanine dinucleotide + diphosphate. Functionally, transfers a GMP moiety from GTP to Mo-molybdopterin (Mo-MPT) cofactor (Moco or molybdenum cofactor) to form Mo-molybdopterin guanine dinucleotide (Mo-MGD) cofactor. The polypeptide is Probable molybdenum cofactor guanylyltransferase (Bacillus cereus (strain AH187)).